The following is a 119-amino-acid chain: NAD(P)H-quinone oxidoreductase subunit M (119 aa).

This sequence belongs to the complex I NdhM subunit family. In terms of assembly, NDH-1 can be composed of about 15 different subunits; different subcomplexes with different compositions have been identified which probably have different functions.

It localises to the cell inner membrane. It catalyses the reaction a plastoquinone + NADH + (n+1) H(+)(in) = a plastoquinol + NAD(+) + n H(+)(out). It carries out the reaction a plastoquinone + NADPH + (n+1) H(+)(in) = a plastoquinol + NADP(+) + n H(+)(out). Functionally, NDH-1 shuttles electrons from an unknown electron donor, via FMN and iron-sulfur (Fe-S) centers, to quinones in the respiratory and/or the photosynthetic chain. The immediate electron acceptor for the enzyme in this species is believed to be plastoquinone. Couples the redox reaction to proton translocation, and thus conserves the redox energy in a proton gradient. Cyanobacterial NDH-1 also plays a role in inorganic carbon-concentration. In Gloeobacter violaceus (strain ATCC 29082 / PCC 7421), this protein is NAD(P)H-quinone oxidoreductase subunit M.